Here is a 265-residue protein sequence, read N- to C-terminus: MAERSAPIGVMDSGVGGLSVLAEIQRLLPNETLLYVGDCGHIPYGEKSPDYIRERCRRIAGFFHEQGAKAMVLACNTATVAAVADLRELYPTWPLVGMEPAVKPAAAATRSGVVGVLATTGTLQSAKFAALLDRFANDVQVITQPCPGLVELIEAGDLVSPAVRQLLQGYVQPLLAAGCDTLILGCTHYPFLRPLLAGMVPDDVAIIDTGAAVARQLQRLLGANDLLAEGPAGAARFWTSADPEALRKILPVLWHKSDDVQSFAL.

Substrate contacts are provided by residues 12 to 13 (DS) and 44 to 45 (YG). The active-site Proton donor/acceptor is the Cys-75. Residue 76–77 (NT) participates in substrate binding. The active-site Proton donor/acceptor is the Cys-186. Substrate is bound at residue 187–188 (TH).

The protein belongs to the aspartate/glutamate racemases family.

The enzyme catalyses L-glutamate = D-glutamate. It functions in the pathway cell wall biogenesis; peptidoglycan biosynthesis. Provides the (R)-glutamate required for cell wall biosynthesis. The chain is Glutamate racemase from Pseudomonas putida (strain ATCC 47054 / DSM 6125 / CFBP 8728 / NCIMB 11950 / KT2440).